The following is a 611-amino-acid chain: CRS2-associated factor 2, chloroplastic (611 aa).

Residues 1-58 constitute a chloroplast transit peptide; sequence MPPPPPQRPASSHVGRANLFSASPPPLSNRRYPHHRSLPLPPVSPRRRDPKKHSQQPS. The interval 1–72 is disordered; the sequence is MPPPPPQRPA…TDSGPTRTVT (72 aa). Over residues 55 to 72 the composition is skewed to polar residues; that stretch reads QQPSQEEPTDSGPTRTVT. 2 consecutive CRM domains span residues 232–328 and 350–446; these read EPLT…TRPR and DGFT…YSKP. The segment at 486–509 is CRS2 binding; that stretch reads KMFKLWKSAVDSSLALLLDDAEAN. Residues 554 to 578 form a disordered region; sequence MNDEPETSVAGNEEGQLEQSPDLRD.

In terms of assembly, interacts with CRS2 and RNA. Part of large ribonucleo-protein complexes that include group IIB introns, CRS2 and CAF2.

It localises to the plastid. The protein resides in the chloroplast stroma. Its function is as follows. Required for the splicing of group IIB introns in chloroplasts. Forms splicing particles with CRS2. Interacts with RNA and confers intron specificity of the splicing particles. In Zea mays (Maize), this protein is CRS2-associated factor 2, chloroplastic (CAF2).